A 226-amino-acid chain; its full sequence is Biosynthetic peptidoglycan transglycosylase (226 aa).

A helical membrane pass occupies residues 8-28; the sequence is FFGWTWFVMWRFLLLLALLLL.

This sequence belongs to the glycosyltransferase 51 family.

The protein resides in the cell inner membrane. The enzyme catalyses [GlcNAc-(1-&gt;4)-Mur2Ac(oyl-L-Ala-gamma-D-Glu-L-Lys-D-Ala-D-Ala)](n)-di-trans,octa-cis-undecaprenyl diphosphate + beta-D-GlcNAc-(1-&gt;4)-Mur2Ac(oyl-L-Ala-gamma-D-Glu-L-Lys-D-Ala-D-Ala)-di-trans,octa-cis-undecaprenyl diphosphate = [GlcNAc-(1-&gt;4)-Mur2Ac(oyl-L-Ala-gamma-D-Glu-L-Lys-D-Ala-D-Ala)](n+1)-di-trans,octa-cis-undecaprenyl diphosphate + di-trans,octa-cis-undecaprenyl diphosphate + H(+). The protein operates within cell wall biogenesis; peptidoglycan biosynthesis. Peptidoglycan polymerase that catalyzes glycan chain elongation from lipid-linked precursors. The polypeptide is Biosynthetic peptidoglycan transglycosylase (Shewanella frigidimarina (strain NCIMB 400)).